The chain runs to 108 residues: Somatoliberin (108 aa).

Positions 1–20 are cleaved as a signal peptide; the sequence is MPLWVFFFVILTLSNSSHCS. Residues 21-31 constitute a propeptide that is removed on maturation; it reads PPPPLTLRMRR. L75 is modified (leucine amide). Positions 78-108 are excised as a propeptide; the sequence is QVDSMWAEQKQMELESILVALLQKHSRNSQG.

Belongs to the glucagon family.

The protein resides in the secreted. Its function is as follows. GRF is released by the hypothalamus and acts on the adenohypophyse to stimulate the secretion of growth hormone. This is Somatoliberin (GHRH) from Homo sapiens (Human).